A 1818-amino-acid polypeptide reads, in one-letter code: U3 small nucleolar RNA-associated protein 10 (1818 aa).

A helical membrane pass occupies residues 568-588 (TDFYLLIPLILLALFDNSKLI). The HEAT repeat unit spans residues 1778-1816 (LVPYIAELLEDDDEEVEMEVRRGLVRVIENVLGEPLDRY).

Belongs to the HEATR1/UTP10 family. In terms of assembly, component of the ribosomal small subunit (SSU) processome.

The protein resides in the nucleus. It localises to the nucleolus. It is found in the membrane. Functionally, involved in nucleolar processing of pre-18S ribosomal RNA. Involved in ribosome biosynthesis. The protein is U3 small nucleolar RNA-associated protein 10 of Candida albicans (strain SC5314 / ATCC MYA-2876) (Yeast).